The primary structure comprises 779 residues: Acyl-homoserine lactone acylase PvdQ (779 aa).

An N-terminal signal peptide occupies residues 1 to 25; it reads MIISRPLCGFVFAGLSFAVILPAQA. Positions 202-223 are cleaved as a propeptide — spacer peptide; the sequence is SQQVQALQLAAVRNQRFALERG. The Nucleophile role is filled by S224. Residues 731–746 are compositionally biased toward polar residues; that stretch reads ESSNPQSAHSSDQTEA. The segment at 731–752 is disordered; it reads ESSNPQSAHSSDQTEAFSKKQW.

This sequence belongs to the peptidase S45 family. In terms of assembly, heterodimer of an alpha subunit and a beta subunit processed from the same precursor.

The protein localises to the periplasm. It catalyses the reaction an N-acyl-L-homoserine lactone + H2O = L-homoserine lactone + a carboxylate. Its function is as follows. Catalyzes the deacylation of acyl-homoserine lactone (AHL or acyl-HSL), releasing homoserine lactone (HSL) and the corresponding fatty acid. Possesses a specificity for the degradation of long-chain acyl-HSLs (side chains of 11 to 14 carbons in length). This chain is Acyl-homoserine lactone acylase PvdQ (pvdQ), found in Pseudomonas savastanoi pv. phaseolicola (strain 1448A / Race 6) (Pseudomonas syringae pv. phaseolicola (strain 1448A / Race 6)).